We begin with the raw amino-acid sequence, 503 residues long: UDP-N-acetylmuramoylalanine--D-glutamate ligase (503 aa).

Gly-129–Thr-135 is an ATP binding site. A disordered region spans residues Asp-284 to Ala-305.

The protein belongs to the MurCDEF family.

The protein localises to the cytoplasm. The catalysed reaction is UDP-N-acetyl-alpha-D-muramoyl-L-alanine + D-glutamate + ATP = UDP-N-acetyl-alpha-D-muramoyl-L-alanyl-D-glutamate + ADP + phosphate + H(+). It functions in the pathway cell wall biogenesis; peptidoglycan biosynthesis. Cell wall formation. Catalyzes the addition of glutamate to the nucleotide precursor UDP-N-acetylmuramoyl-L-alanine (UMA). The protein is UDP-N-acetylmuramoylalanine--D-glutamate ligase of Cupriavidus pinatubonensis (strain JMP 134 / LMG 1197) (Cupriavidus necator (strain JMP 134)).